Consider the following 222-residue polypeptide: Cytidylate kinase (222 aa).

10 to 18 (GTSSSGKSV) lines the ATP pocket.

This sequence belongs to the cytidylate kinase family. Type 1 subfamily.

It localises to the cytoplasm. It carries out the reaction CMP + ATP = CDP + ADP. The catalysed reaction is dCMP + ATP = dCDP + ADP. This Mycoplasma capricolum subsp. capricolum (strain California kid / ATCC 27343 / NCTC 10154) protein is Cytidylate kinase.